An 847-amino-acid polypeptide reads, in one-letter code: Zinc transporter ZIP10 (847 aa).

The N-terminal stretch at 1 to 26 is a signal peptide; the sequence is MMRVHTHTRLCFLCVLTLLYHQCSHC. The disordered stretch occupies residues 136–374; that stretch reads GRHSHSAGHP…RREVPGSPAH (239 aa). Over residues 162 to 171 the composition is skewed to basic and acidic residues; it reads HHENEEHTLA. The span at 179–188 shows a compositional bias: polar residues; it reads TLGTGATPPS. Residues 190–269 show a composition bias toward basic and acidic residues; it reads SEEHDHDHEH…QEHNDLSDQN (80 aa). Basic residues-rich tracts occupy residues 270–285 and 314–330; these read HHHH…HPHL and TRRH…RGRN. N-linked (GlcNAc...) asparagine glycosylation is present at Asn-385. A run of 3 helical transmembrane segments spans residues 447 to 467, 474 to 494, and 529 to 549; these read FVSI…VPIL, FLLT…ALLH, and GLTA…IGMF. The interval 613-676 is disordered; sequence ELQPLDSPSK…HSHHGHCHSD (64 aa). Residues 629–646 are compositionally biased toward basic and acidic residues; sequence DSDHPYEAPVKTEEDNVP. The segment covering 648–672 has biased composition (basic residues); sequence AKSKKHGHGHGHGHGHGHGHSHHGH. 4 helical membrane-spanning segments follow: residues 705–725, 750–770, 779–799, and 817–837; these read AIGA…VAVF, IVYN…GTAV, SWIF…DMLP, and FVLQ…IAIF.

It belongs to the ZIP transporter (TC 2.A.5) family. Undergoes N-terminal ectodomain shedding.

Its subcellular location is the cell membrane. The protein resides in the apical cell membrane. The catalysed reaction is Zn(2+)(in) = Zn(2+)(out). Zinc-influx transporter. When associated with slc39a6, the heterodimer slc39a10/slc39a6 has a functional role in epithelial-mesenchymal transition (EMT) during embryonic development. Slc39a10/slc39a6 heterodimers play also an essentiel role in initiating mitosis by importing zinc into cells to initiate a pathway resulting in the onset of mitosis. When associated with slc39a6, the heterodimer controls Ncam1 phosphorylation and integration into focal adhesion complexes during EMT. This is Zinc transporter ZIP10 from Danio rerio (Zebrafish).